Here is a 430-residue protein sequence, read N- to C-terminus: Glutamate-1-semialdehyde 2,1-aminomutase (430 aa).

An N6-(pyridoxal phosphate)lysine modification is found at K268.

Belongs to the class-III pyridoxal-phosphate-dependent aminotransferase family. HemL subfamily. Pyridoxal 5'-phosphate serves as cofactor.

The protein resides in the cytoplasm. The catalysed reaction is (S)-4-amino-5-oxopentanoate = 5-aminolevulinate. It participates in porphyrin-containing compound metabolism; protoporphyrin-IX biosynthesis; 5-aminolevulinate from L-glutamyl-tRNA(Glu): step 2/2. This Methanopyrus kandleri (strain AV19 / DSM 6324 / JCM 9639 / NBRC 100938) protein is Glutamate-1-semialdehyde 2,1-aminomutase.